We begin with the raw amino-acid sequence, 235 residues long: Large ribosomal subunit protein uL3 (235 aa).

Gln151 carries the N5-methylglutamine modification.

This sequence belongs to the universal ribosomal protein uL3 family. Part of the 50S ribosomal subunit. Forms a cluster with proteins L14 and L19. Post-translationally, methylated by PrmB.

Its function is as follows. One of the primary rRNA binding proteins, it binds directly near the 3'-end of the 23S rRNA, where it nucleates assembly of the 50S subunit. This Rhodospirillum rubrum (strain ATCC 11170 / ATH 1.1.1 / DSM 467 / LMG 4362 / NCIMB 8255 / S1) protein is Large ribosomal subunit protein uL3.